The following is a 196-amino-acid chain: Transmembrane 4 L6 family member 5 (196 aa).

Over 1-9 (MCTGKCARF) the chain is Cytoplasmic. The chain crosses the membrane as a helical span at residues 10–30 (VGLSLIPLSLVCIVANALLLV). The Extracellular segment spans residues 31–45 (PNGQTTWTKDHLSLQ). Residues 46–66 (VWLMAGFVGGGLMVLCPGISA) form a helical membrane-spanning segment. Over 67–89 (VRAGGKGCCGAGCCGNRCRMLRS) the chain is Cytoplasmic. A helical membrane pass occupies residues 90–110 (VFCSAIGLLGAIYCLSVSGTG). The interval 90–196 (VFCSAIGLLG…DCRKKQGSSQ (107 aa)) is interaction with MTOR and CASTOR1. Residues 111-156 (LRIGPQCLMNGSWDYHFQDTAGSYLLNRTQWNLCVEPPDVVLWNVT) lie on the Extracellular side of the membrane. N-linked (GlcNAc...) asparagine glycosylation occurs at Asn120. 123-128 (WDYHFQ) is a binding site for L-arginine. N-linked (GlcNAc...) asparagine glycans are attached at residues Asn137 and Asn154. The chain crosses the membrane as a helical span at residues 157-177 (LFSLLVAASCLEILLCGVQLV). The Cytoplasmic portion of the chain corresponds to 178-196 (NASIGVLCGDCRKKQGSSQ).

This sequence belongs to the L6 tetraspanin family. In terms of assembly, interacts with MTOR; the interaction is positively regulated by arginine and is negatively regulated by leucine. Interacts with SLC38A9. Interacts with SLC7A1; the interaction is negatively regulated by arginine. Interacts with CASTOR1; the interaction is positively regulated by leucine and is negatively regulated by arginine.

The protein localises to the lysosome membrane. It localises to the cell membrane. In terms of biological role, acts as a lysosomal membrane arginine sensor. Forms a complex with MTOR and SLC38A9 on lysosomal membranes in an arginine-regulated manner, leading to arginine efflux which enables the activation of mTORC1 which subsequently leads to RPS6KB1 and EIF4EBP1 phosphorylations. Facilitates cell cycle G1/S phase progression and the translocation of the CDK4-CCND1 complex into the nucleus. CDKN1B and RHOA/ROCK signaling activity are involved in TM4SF5-mediated acceleration of G1/S phase progression. This is Transmembrane 4 L6 family member 5 (TM4SF5) from Bos taurus (Bovine).